Reading from the N-terminus, the 346-residue chain is Large ribosomal subunit protein uL3 (346 aa).

The segment at 324–346 is disordered; it reads RPPKKKPPVERPQITYVSRESKQ.

It belongs to the universal ribosomal protein uL3 family. In terms of assembly, part of the 50S ribosomal subunit. Forms a cluster with proteins L14 and L24e.

One of the primary rRNA binding proteins, it binds directly near the 3'-end of the 23S rRNA, where it nucleates assembly of the 50S subunit. This is Large ribosomal subunit protein uL3 from Thermococcus kodakarensis (strain ATCC BAA-918 / JCM 12380 / KOD1) (Pyrococcus kodakaraensis (strain KOD1)).